We begin with the raw amino-acid sequence, 95 residues long: Small ribosomal subunit protein bS18 (95 aa).

It belongs to the bacterial ribosomal protein bS18 family. In terms of assembly, part of the 30S ribosomal subunit. Forms a tight heterodimer with protein bS6.

In terms of biological role, binds as a heterodimer with protein bS6 to the central domain of the 16S rRNA, where it helps stabilize the platform of the 30S subunit. The protein is Small ribosomal subunit protein bS18 of Rickettsia rickettsii (strain Sheila Smith).